The sequence spans 925 residues: Proto-oncogene DBL (925 aa).

One can recognise a CRAL-TRIO domain in the interval 1–88 (MAEANPRRGK…ELGGTLQYCH (88 aa)). One copy of the Spectrin repeat lies at 221-322 (WKFEQDFQQL…EIKAKRIQLS (102 aa)). The region spanning 495 to 675 (LKNHVLNELI…LDLLKSVNDS (181 aa)) is the DH domain. A PH domain is found at 687–809 (NLNELGKMIM…WLKEIRNILL (123 aa)).

Belongs to the MCF2 family. As to quaternary structure, interacts with an array of inositol phospholipids such as phosphatidylinositol 3-phosphate (PI3P), phosphatidylinositol 4-phosphate (PI4P) and phosphatidylinositol 5-phosphate (PI5P). May interact with CCPG1. In terms of processing, phosphorylation by TNK2 enhances guanine nucleotide exchange factor (GEF) activity toward Rho family proteins. As to expression, isoform 1 is expressed only in brain. Isoform 3 is expressed in heart, kidney, spleen, liver and testis. Isoform 4 is expressed in brain, heart, kidney, testis, placenta, stomach and peripheral blood. The protein is detectable in brain, heart, kidney, intestine, muscle, lung and testis.

It localises to the cytoplasm. Its subcellular location is the membrane. Its function is as follows. Guanine nucleotide exchange factor (GEF) that modulates the Rho family of GTPases. Promotes the conversion of some member of the Rho family GTPase from the GDP-bound to the GTP-bound form. Isoform 1 exhibits no activity toward RHOA, RAC1 or CDC42. Isoform 2 exhibits decreased GEF activity toward CDC42. Isoform 3 exhibits a weak but significant activity toward RAC1 and CDC42. Isoform 4 exhibits significant activity toward RHOA and CDC42. The truncated DBL oncogene is active toward RHOA, RAC1 and CDC42. The sequence is that of Proto-oncogene DBL (MCF2) from Homo sapiens (Human).